Here is a 195-residue protein sequence, read N- to C-terminus: Ras-related protein Rab-31 (195 aa).

GTP contacts are provided by Gly16, Gly18, Lys19, Ser20, Ser21, Asp32, and His33. Position 20 (Ser20) interacts with Mg(2+). 2 consecutive short sequence motifs (switch) follow at residues 30 to 42 (HFDH…IGAS) and 63 to 79 (AGQE…YRGS). Ser36 is subject to Phosphoserine. Residues Thr38, Gly64, Asn119, Asp122, Ala150, and Lys151 each contribute to the GTP site. Thr38 serves as a coordination point for Mg(2+). Residues Cys194 and Cys195 are each lipidated (S-geranylgeranyl cysteine).

Belongs to the small GTPase superfamily. Rab family. Interacts (in GDP-bound form) with RIN3 and GAPVD1, which function as guanine exchange factors (GEF). Interacts (in GTP-bound form) with EEA1. Interacts with NGFR. Interacts with EGFR. Interacts with OCRL. Interacts (in GTP-bound form) with APPL2; interaction contributes to or enhances recruitment of APPL2 to the phagosomes; interaction enhances Fc-gamma receptor-mediated phagocytosis through PI3K/Akt signaling in macrophages. Mg(2+) serves as cofactor. Detected in brain astrocytes, spleen and intestine (at protein level).

The protein localises to the early endosome. Its subcellular location is the golgi apparatus. The protein resides in the trans-Golgi network. It is found in the trans-Golgi network membrane. It localises to the cytoplasmic vesicle. The protein localises to the phagosome. Its subcellular location is the phagosome membrane. It carries out the reaction GTP + H2O = GDP + phosphate + H(+). With respect to regulation, regulated by guanine nucleotide exchange factors (GEFs) including RIN3 and GAPVD1 which promote the exchange of bound GDP for free GTP. Regulated by GTPase activating proteins (GAPs) which increase the GTP hydrolysis activity. Inhibited by GDP dissociation inhibitors (GDIs) which prevent Rab-GDP dissociation. Its function is as follows. The small GTPases Rab are key regulators of intracellular membrane trafficking, from the formation of transport vesicles to their fusion with membranes. Rabs cycle between an inactive GDP-bound form and an active GTP-bound form that is able to recruit to membranes different set of downstream effectors directly responsible for vesicle formation, movement, tethering and fusion. Required for the integrity and for normal function of the Golgi apparatus and the trans-Golgi network. Plays a role in insulin-stimulated translocation of GLUT4 to the cell membrane. Plays a role in the maturation of phagosomes that engulf pathogens, such as S.aureus and Mycobacterium. Plays a role in M6PR transport from the trans-Golgi network to endosomes. Plays a role in the internalization of EGFR from the cell membrane into endosomes. The chain is Ras-related protein Rab-31 from Rattus norvegicus (Rat).